Consider the following 461-residue polypeptide: Ribonuclease inhibitor (461 aa).

Serine 2 is modified (N-acetylserine). The interval 2-11 (SLDIQSLDIQ) is 2 X 5 AA tandem repeats of S-L-D-I-Q. LRR repeat units follow at residues 20 to 48 (WAEL…CKDI), 49 to 76 (SSAL…VHCV), 77 to 105 (LQGL…CGVL), 106 to 133 (SSTL…LQLL), 134 to 162 (CEGL…CKPL), 163 to 190 (ASVL…VRVL), 191 to 219 (CQGL…CRDL), 220 to 247 (CGIV…MAEL), 248 to 276 (CPGL…CGDL), 277 to 304 (CRVL…ARLL), 305 to 333 (CETL…CSHF), 334 to 361 (SSVL…VQEL), 362 to 390 (CQGL…CSSL), 391 to 418 (AATL…ILQL), and 419 to 447 (VESV…EDRL). Serine 91 carries the post-translational modification Phosphoserine.

In terms of assembly, forms high-affinity heterodimers with RNASE1, ANG and RNASE2.

It localises to the cytoplasm. Its subcellular location is the nucleus. Its function is as follows. Ribonuclease inhibitor which inhibits RNASE1, RNASE2 and angiogenin (ANG). May play a role in redox homeostasis. Required to inhibit the cytotoxic tRNA ribonuclease activity of ANG in the cytoplasm in absence of stress. Relocates to the nucleus in response to stress, relieving inhibition of ANG in the cytoplasm, and inhibiting the angiogenic activity of ANG in the nucleus. This chain is Ribonuclease inhibitor (RNH1), found in Pan troglodytes (Chimpanzee).